The chain runs to 391 residues: Carbamoyl phosphate synthase small chain (391 aa).

A CPSase region spans residues 1–199 (MVRISGFCCA…TWEFIEGPTT (199 aa)). Positions 61, 251, and 253 each coordinate L-glutamine. The Glutamine amidotransferase type-1 domain occupies 203-388 (TVVAIDFGVK…VALMRDRQPT (186 aa)). Catalysis depends on cysteine 279, which acts as the Nucleophile. Residues leucine 280, glutamine 283, asparagine 319, glycine 321, and phenylalanine 322 each coordinate L-glutamine. Active-site residues include histidine 361 and glutamate 363.

Belongs to the CarA family. Composed of two chains; the small (or glutamine) chain promotes the hydrolysis of glutamine to ammonia, which is used by the large (or ammonia) chain to synthesize carbamoyl phosphate. Tetramer of heterodimers (alpha,beta)4.

The catalysed reaction is hydrogencarbonate + L-glutamine + 2 ATP + H2O = carbamoyl phosphate + L-glutamate + 2 ADP + phosphate + 2 H(+). It carries out the reaction L-glutamine + H2O = L-glutamate + NH4(+). Its pathway is amino-acid biosynthesis; L-arginine biosynthesis; carbamoyl phosphate from bicarbonate: step 1/1. The protein operates within pyrimidine metabolism; UMP biosynthesis via de novo pathway; (S)-dihydroorotate from bicarbonate: step 1/3. Small subunit of the glutamine-dependent carbamoyl phosphate synthetase (CPSase). CPSase catalyzes the formation of carbamoyl phosphate from the ammonia moiety of glutamine, carbonate, and phosphate donated by ATP, constituting the first step of 2 biosynthetic pathways, one leading to arginine and/or urea and the other to pyrimidine nucleotides. The small subunit (glutamine amidotransferase) binds and cleaves glutamine to supply the large subunit with the substrate ammonia. This chain is Carbamoyl phosphate synthase small chain, found in Synechococcus sp. (strain ATCC 27144 / PCC 6301 / SAUG 1402/1) (Anacystis nidulans).